A 599-amino-acid chain; its full sequence is Membrane protein insertase YidC (599 aa).

Residues Asn6–Met26 traverse the membrane as a helical segment. A disordered region spans residues Arg35–Arg78. Over residues Gln41–Ala76 the composition is skewed to low complexity. Helical transmembrane passes span Phe378–Ser398, Trp448–Ile468, Val501–Gln521, and Ile536–Val556.

It belongs to the OXA1/ALB3/YidC family. Type 1 subfamily. As to quaternary structure, interacts with the Sec translocase complex via SecD. Specifically interacts with transmembrane segments of nascent integral membrane proteins during membrane integration.

The protein localises to the cell inner membrane. Its function is as follows. Required for the insertion and/or proper folding and/or complex formation of integral membrane proteins into the membrane. Involved in integration of membrane proteins that insert both dependently and independently of the Sec translocase complex, as well as at least some lipoproteins. Aids folding of multispanning membrane proteins. This is Membrane protein insertase YidC from Agrobacterium fabrum (strain C58 / ATCC 33970) (Agrobacterium tumefaciens (strain C58)).